The following is a 272-amino-acid chain: Phosphoglycolate phosphatase (272 aa).

The active-site Nucleophile is the aspartate 19. The Mg(2+) site is built by aspartate 19, aspartate 21, and aspartate 182.

This sequence belongs to the HAD-like hydrolase superfamily. CbbY/CbbZ/Gph/YieH family. The cofactor is Mg(2+).

It carries out the reaction 2-phosphoglycolate + H2O = glycolate + phosphate. It participates in organic acid metabolism; glycolate biosynthesis; glycolate from 2-phosphoglycolate: step 1/1. Specifically catalyzes the dephosphorylation of 2-phosphoglycolate. Is involved in the dissimilation of the intracellular 2-phosphoglycolate formed during the DNA repair of 3'-phosphoglycolate ends, a major class of DNA lesions induced by oxidative stress. In Pseudomonas fluorescens (strain ATCC BAA-477 / NRRL B-23932 / Pf-5), this protein is Phosphoglycolate phosphatase.